Consider the following 295-residue polypeptide: 4-hydroxybenzoate octaprenyltransferase (295 aa).

The next 8 membrane-spanning stretches (helical) occupy residues 28–48, 51–71, 101–121, 124–144, 159–179, 220–240, 242–262, and 274–294; these read AGWL…AGGF, WHLL…GCCV, ALGV…TTNA, IAWS…KRFV, IPMA…WLVL, VMAF…PFGL, WPLH…WRLI, and FTGN…GFAL.

Belongs to the UbiA prenyltransferase family. It depends on Mg(2+) as a cofactor.

It localises to the cell inner membrane. It catalyses the reaction all-trans-octaprenyl diphosphate + 4-hydroxybenzoate = 4-hydroxy-3-(all-trans-octaprenyl)benzoate + diphosphate. Its pathway is cofactor biosynthesis; ubiquinone biosynthesis. Functionally, catalyzes the prenylation of para-hydroxybenzoate (PHB) with an all-trans polyprenyl group. Mediates the second step in the final reaction sequence of ubiquinone-8 (UQ-8) biosynthesis, which is the condensation of the polyisoprenoid side chain with PHB, generating the first membrane-bound Q intermediate 3-octaprenyl-4-hydroxybenzoate. The chain is 4-hydroxybenzoate octaprenyltransferase from Paracidovorax citrulli (strain AAC00-1) (Acidovorax citrulli).